Consider the following 150-residue polypeptide: MKLILTAAVENLGVAGDIVEVKNGYGRNLLLPRGLAIVATPGAEKQIEGIKRAQEAREIRDLDHAREVKVALEALEGVTIAVRTSESGKLFGSVKTDDIVDAVKAAGGPNLDKRAIVLPKNLVKTTGKYQVEAKLTDGIVSRVKFEVVAA.

The protein belongs to the bacterial ribosomal protein bL9 family.

In terms of biological role, binds to the 23S rRNA. This Corynebacterium glutamicum (strain ATCC 13032 / DSM 20300 / JCM 1318 / BCRC 11384 / CCUG 27702 / LMG 3730 / NBRC 12168 / NCIMB 10025 / NRRL B-2784 / 534) protein is Large ribosomal subunit protein bL9.